A 269-amino-acid polypeptide reads, in one-letter code: MSLVLINFYRFVALGDCDRWRQWLQDLCTALGLRGTILLAPEGINAGLAGNTEAIAQFLSELQQHPPFANLSFKSATVTDWPFARLKVKVKPEIVSLGCPELNPAERTGTLVAPQDWNQLLQDPEVVLIDVRNRFEIALGSFPRAIDPQTDRFRDFPRFVQEQLLPQPPAKVAMFCTGGIRCEKASAYLLEQGIETVYQLEGGILNYLEAIAPEENHWQGDCFVFDERIAVDRQLQTPQHQLCPACGQPVVATTCSHCQDSVQASSSPK.

One can recognise a Rhodanese domain in the interval 122–216 (QDPEVVLIDV…YLEAIAPEEN (95 aa)). The Cysteine persulfide intermediate role is filled by Cys-176.

This sequence belongs to the TrhO family.

The enzyme catalyses uridine(34) in tRNA + AH2 + O2 = 5-hydroxyuridine(34) in tRNA + A + H2O. In terms of biological role, catalyzes oxygen-dependent 5-hydroxyuridine (ho5U) modification at position 34 in tRNAs. In Synechococcus elongatus (strain ATCC 33912 / PCC 7942 / FACHB-805) (Anacystis nidulans R2), this protein is tRNA uridine(34) hydroxylase.